The primary structure comprises 483 residues: UDP-glucosyl transferase 73B2 (483 aa).

The Proton acceptor role is filled by His22. His22 serves as a coordination point for an anthocyanidin. Residue Asp133 is the Charge relay of the active site. The UDP-alpha-D-glucose site is built by Ala355, Gln357, His372, Trp375, Asn376, Ser377, and Glu380. Ala395 contributes to the an anthocyanidin binding site. The UDP-alpha-D-glucose site is built by Glu396 and Gln397.

It belongs to the UDP-glycosyltransferase family. Expressed in roots and flowers.

The enzyme catalyses a 7-O-hydroxy-flavonol + UDP-alpha-D-glucose = a flavonol 7-O-beta-D-glucoside + UDP + H(+). The protein operates within secondary metabolite biosynthesis; flavonoid biosynthesis. In terms of biological role, catalyzes the glycosylation of flavonoids from UDP-glucose. Uses a wide range of flavonoid substrates including flavonols (quercetin, kaempferol, isorhamnetin, 3-OH 7,2',4'-MeO-flavone), flavones (luteolin, apigenin), flavanones (naringenin, hesperetin), flavanonols (taxifolin), isoflavones (genistein, daidzein), flavonol glycosides (quercitrin, isoquercitrin, rutin), and chalcones (isoliquiritigenin). Specific for the C-7 position, with a 20-fold lower activity for the C-3 position. The polypeptide is UDP-glucosyl transferase 73B2 (UGT73B2) (Arabidopsis thaliana (Mouse-ear cress)).